Consider the following 267-residue polypeptide: 3-methyl-2-oxobutanoate hydroxymethyltransferase (267 aa).

Mg(2+) is bound by residues Asp46 and Asp85. 3-methyl-2-oxobutanoate-binding positions include 46-47 (DS), Asp85, and Lys115. Glu117 is a binding site for Mg(2+). Catalysis depends on Glu184, which acts as the Proton acceptor.

This sequence belongs to the PanB family. Homodecamer; pentamer of dimers. Mg(2+) serves as cofactor.

The protein resides in the cytoplasm. It catalyses the reaction 3-methyl-2-oxobutanoate + (6R)-5,10-methylene-5,6,7,8-tetrahydrofolate + H2O = 2-dehydropantoate + (6S)-5,6,7,8-tetrahydrofolate. Its pathway is cofactor biosynthesis; (R)-pantothenate biosynthesis; (R)-pantoate from 3-methyl-2-oxobutanoate: step 1/2. In terms of biological role, catalyzes the reversible reaction in which hydroxymethyl group from 5,10-methylenetetrahydrofolate is transferred onto alpha-ketoisovalerate to form ketopantoate. This is 3-methyl-2-oxobutanoate hydroxymethyltransferase from Geotalea uraniireducens (strain Rf4) (Geobacter uraniireducens).